The sequence spans 815 residues: Probable receptor-like protein kinase At2g39360 (815 aa).

Positions 1-26 (MINLKLFLELKLCFLITLLCSSHISS) are cleaved as a signal peptide. Residues 27–407 (VSDTFFINCG…SSSNKSSNTS (381 aa)) are Extracellular-facing. Residues N40, N45, N125, N146, N209, N244, N277, N331, N355, N401, and N405 are each glycosylated (N-linked (GlcNAc...) asparagine). The helical transmembrane segment at 408–428 (VGLIAGLSAALCVALVFGVVV) threads the bilayer. Residues 429–815 (SWWCIRKRRR…FAQMVREETR (387 aa)) lie on the Cytoplasmic side of the membrane. The region spanning 487-761 (FDESLVIGVG…GDLLWNLEFM (275 aa)) is the Protein kinase domain. Residues 493 to 501 (IGVGGFGKV) and K515 each bind ATP. Residue D612 is the Proton acceptor of the active site.

Belongs to the protein kinase superfamily. Ser/Thr protein kinase family.

The protein localises to the cell membrane. The chain is Probable receptor-like protein kinase At2g39360 from Arabidopsis thaliana (Mouse-ear cress).